The sequence spans 222 residues: 2-C-methyl-D-erythritol 4-phosphate cytidylyltransferase (222 aa).

It belongs to the IspD/TarI cytidylyltransferase family. IspD subfamily.

The enzyme catalyses 2-C-methyl-D-erythritol 4-phosphate + CTP + H(+) = 4-CDP-2-C-methyl-D-erythritol + diphosphate. It participates in isoprenoid biosynthesis; isopentenyl diphosphate biosynthesis via DXP pathway; isopentenyl diphosphate from 1-deoxy-D-xylulose 5-phosphate: step 2/6. In terms of biological role, catalyzes the formation of 4-diphosphocytidyl-2-C-methyl-D-erythritol from CTP and 2-C-methyl-D-erythritol 4-phosphate (MEP). In Thermotoga neapolitana (strain ATCC 49049 / DSM 4359 / NBRC 107923 / NS-E), this protein is 2-C-methyl-D-erythritol 4-phosphate cytidylyltransferase.